We begin with the raw amino-acid sequence, 380 residues long: Lipid-A-disaccharide synthase (380 aa).

The protein belongs to the LpxB family.

The catalysed reaction is a lipid X + a UDP-2-N,3-O-bis[(3R)-3-hydroxyacyl]-alpha-D-glucosamine = a lipid A disaccharide + UDP + H(+). Its pathway is bacterial outer membrane biogenesis; LPS lipid A biosynthesis. Its function is as follows. Condensation of UDP-2,3-diacylglucosamine and 2,3-diacylglucosamine-1-phosphate to form lipid A disaccharide, a precursor of lipid A, a phosphorylated glycolipid that anchors the lipopolysaccharide to the outer membrane of the cell. In Pseudomonas syringae pv. tomato (strain ATCC BAA-871 / DC3000), this protein is Lipid-A-disaccharide synthase.